The following is a 257-amino-acid chain: Phosphonates import ATP-binding protein PhnC (257 aa).

In terms of domain architecture, ABC transporter spans 4 to 248; it reads IEFKDVSKVY…VFNHIYGRSI (245 aa).

The protein belongs to the ABC transporter superfamily. Phosphonates importer (TC 3.A.1.9.1) family. In terms of assembly, the complex is composed of two ATP-binding proteins (PhnC), two transmembrane proteins (PhnE) and a solute-binding protein (PhnD).

Its subcellular location is the cell membrane. It catalyses the reaction phosphonate(out) + ATP + H2O = phosphonate(in) + ADP + phosphate + H(+). Its function is as follows. Part of the ABC transporter complex PhnCDE involved in phosphonates import. Responsible for energy coupling to the transport system. This Staphylococcus epidermidis (strain ATCC 35984 / DSM 28319 / BCRC 17069 / CCUG 31568 / BM 3577 / RP62A) protein is Phosphonates import ATP-binding protein PhnC.